A 143-amino-acid chain; its full sequence is Transcriptional regulator MraZ (143 aa).

SpoVT-AbrB domains follow at residues 5-47 and 76-119; these read EFRH…PMNE and ASEC…SQEK.

The protein belongs to the MraZ family. Forms oligomers.

The protein resides in the cytoplasm. The protein localises to the nucleoid. This is Transcriptional regulator MraZ from Natranaerobius thermophilus (strain ATCC BAA-1301 / DSM 18059 / JW/NM-WN-LF).